Consider the following 711-residue polypeptide: MGWLPLLLLLTQCLGVPGQRSPLNDFQVLRGTELQHLLHAVVPGPWQEDVADAEECAGRCGPLMDCRAFHYNVSSHGCQLLPWTQHSPHTRLRRSGRCDLFQKKDYVRTCIMNNGVGYRGTMATTVGGLPCQAWSHKFPNDHKYTPTLRNGLEENFCRNPDGDPGGPWCYTTDPAVRFQSCGIKSCREAACVWCNGEEYRGAVDRTESGRECQRWDLQHPHQHPFEPGKFLDQGLDDNYCRNPDGSERPWCYTTDPQIEREFCDLPRCGSEAQPRQEATTVSCFRGKGEGYRGTANTTTAGVPCQRWDAQIPHQHRFTPEKYACKDLRENFCRNPDGSEAPWCFTLRPGMRAAFCYQIRRCTDDVRPQDCYHGAGEQYRGTVSKTRKGVQCQRWSAETPHKPQFTFTSEPHAQLEENFCRNPDGDSHGPWCYTMDPRTPFDYCALRRCADDQPPSILDPPDQVQFEKCGKRVDRLDQRRSKLRVVGGHPGNSPWTVSLRNRQGQHFCGGSLVKEQWILTARQCFSSCHMPLTGYEVWLGTLFQNPQHGEPSLQRVPVAKMVCGPSGSQLVLLKLERSVTLNQRVALICLPPEWYVVPPGTKCEIAGWGETKGTGNDTVLNVALLNVISNQECNIKHRGRVRESEMCTEGLLAPVGACEGDYGGPLACFTHNCWVLEGIIIPNRVCARSRWPAVFTRVSVFVDWIHKVMRLG.

Positions 1–18 (MGWLPLLLLLTQCLGVPG) are cleaved as a signal peptide. In terms of domain architecture, PAN spans 21–105 (SPLNDFQVLR…GRCDLFQKKD (85 aa)). Intrachain disulfides connect cysteine 56–cysteine 78, cysteine 60–cysteine 66, cysteine 110–cysteine 186, cysteine 131–cysteine 169, cysteine 157–cysteine 181, cysteine 191–cysteine 268, cysteine 194–cysteine 324, cysteine 212–cysteine 251, cysteine 240–cysteine 263, cysteine 283–cysteine 361, cysteine 304–cysteine 343, cysteine 332–cysteine 355, cysteine 370–cysteine 448, cysteine 391–cysteine 431, cysteine 419–cysteine 443, cysteine 468–cysteine 588, cysteine 507–cysteine 523, cysteine 602–cysteine 667, cysteine 632–cysteine 646, and cysteine 657–cysteine 685. A glycan (N-linked (GlcNAc...) asparagine) is linked at asparagine 72. Kringle domains are found at residues 110 to 186 (CIMN…IKSC), 191 to 268 (CVWC…LPRC), 283 to 361 (CFRG…IRRC), and 370 to 448 (CYHG…LRRC). Asparagine 296 carries N-linked (GlcNAc...) asparagine glycosylation. One can recognise a Peptidase S1 domain in the interval 484–709 (VVGGHPGNSP…FVDWIHKVMR (226 aa)). Asparagine 615 carries an N-linked (GlcNAc...) asparagine glycan.

It belongs to the peptidase S1 family. Plasminogen subfamily. In terms of assembly, dimer of an alpha chain and a beta chain linked by a disulfide bond. Interacts (via beta chain) with MST1R (via SEMA domain). Cleaved after Arg-483, probably by HPN/Hepsin, to yield the active form consisting of two disulfide-linked chains.

Its subcellular location is the secreted. This is Hepatocyte growth factor-like protein (MST1) from Homo sapiens (Human).